Consider the following 379-residue polypeptide: Acyl-CoA dehydrogenase, short-chain specific (379 aa).

Belongs to the acyl-CoA dehydrogenase family. It depends on FAD as a cofactor.

The enzyme catalyses butanoyl-CoA + oxidized [electron-transfer flavoprotein] + H(+) = (2E)-butenoyl-CoA + reduced [electron-transfer flavoprotein]. It carries out the reaction a short-chain 2,3-saturated fatty acyl-CoA + oxidized [electron-transfer flavoprotein] + H(+) = a short-chain (2E)-enoyl-CoA + reduced [electron-transfer flavoprotein]. It functions in the pathway lipid metabolism; butanoate metabolism. In Clostridium acetobutylicum (strain ATCC 824 / DSM 792 / JCM 1419 / IAM 19013 / LMG 5710 / NBRC 13948 / NRRL B-527 / VKM B-1787 / 2291 / W), this protein is Acyl-CoA dehydrogenase, short-chain specific (bcd).